The primary structure comprises 416 residues: Pre-mRNA-splicing factor slu-7 (416 aa).

Residues 1–34 (MPPPPPNRREQATAAPSSTDKSETGAGAARKEDN) form a disordered region. The CCHC-type zinc finger occupies 95–112 (GACENCGAMGHKKKDCLE). 2 stretches are compositionally biased toward basic and acidic residues: residues 168–179 (RRALQGDQKTPD) and 188–213 (DDKSGFKYDEESDMGRDRATTKQSMR). Residues 168–213 (RRALQGDQKTPDGEGADGPEDDKSGFKYDEESDMGRDRATTKQSMR) form a disordered region.

This sequence belongs to the SLU7 family. Associated with the spliceosome.

The protein localises to the nucleus. Functionally, involved in pre-mRNA splicing. The sequence is that of Pre-mRNA-splicing factor slu-7 (slu-7) from Neurospora crassa (strain ATCC 24698 / 74-OR23-1A / CBS 708.71 / DSM 1257 / FGSC 987).